The following is a 637-amino-acid chain: Biosynthetic arginine decarboxylase (637 aa).

Lys-101 carries the post-translational modification N6-(pyridoxal phosphate)lysine. 286 to 296 (FDVGGGLAVDY) serves as a coordination point for substrate.

Belongs to the Orn/Lys/Arg decarboxylase class-II family. SpeA subfamily. Mg(2+) serves as cofactor. It depends on pyridoxal 5'-phosphate as a cofactor.

The catalysed reaction is L-arginine + H(+) = agmatine + CO2. It functions in the pathway amine and polyamine biosynthesis; agmatine biosynthesis; agmatine from L-arginine: step 1/1. Its function is as follows. Catalyzes the biosynthesis of agmatine from arginine. This is Biosynthetic arginine decarboxylase from Shewanella sp. (strain ANA-3).